Reading from the N-terminus, the 251-residue chain is Imidazole glycerol phosphate synthase subunit HisF (251 aa).

Catalysis depends on residues Asp11 and Asp130.

It belongs to the HisA/HisF family. Heterodimer of HisH and HisF.

Its subcellular location is the cytoplasm. The catalysed reaction is 5-[(5-phospho-1-deoxy-D-ribulos-1-ylimino)methylamino]-1-(5-phospho-beta-D-ribosyl)imidazole-4-carboxamide + L-glutamine = D-erythro-1-(imidazol-4-yl)glycerol 3-phosphate + 5-amino-1-(5-phospho-beta-D-ribosyl)imidazole-4-carboxamide + L-glutamate + H(+). It functions in the pathway amino-acid biosynthesis; L-histidine biosynthesis; L-histidine from 5-phospho-alpha-D-ribose 1-diphosphate: step 5/9. IGPS catalyzes the conversion of PRFAR and glutamine to IGP, AICAR and glutamate. The HisF subunit catalyzes the cyclization activity that produces IGP and AICAR from PRFAR using the ammonia provided by the HisH subunit. This chain is Imidazole glycerol phosphate synthase subunit HisF, found in Thiobacillus denitrificans (strain ATCC 25259 / T1).